The sequence spans 107 residues: BolA-like protein 3 (107 aa).

The protein belongs to the BolA/IbaG family. As to quaternary structure, interacts with NFU1. Widely expressed.

The protein localises to the mitochondrion. Its function is as follows. Acts as a mitochondrial iron-sulfur (Fe-S) cluster assembly factor that facilitates (Fe-S) cluster insertion into a subset of mitochondrial proteins. Probably acts together with NFU1. The polypeptide is BolA-like protein 3 (Homo sapiens (Human)).